A 285-amino-acid chain; its full sequence is Bifunctional protein FolD 2 (285 aa).

Residues glycine 164–serine 166, serine 189, and valine 230 each bind NADP(+).

The protein belongs to the tetrahydrofolate dehydrogenase/cyclohydrolase family. In terms of assembly, homodimer.

It carries out the reaction (6R)-5,10-methylene-5,6,7,8-tetrahydrofolate + NADP(+) = (6R)-5,10-methenyltetrahydrofolate + NADPH. The enzyme catalyses (6R)-5,10-methenyltetrahydrofolate + H2O = (6R)-10-formyltetrahydrofolate + H(+). Its pathway is one-carbon metabolism; tetrahydrofolate interconversion. In terms of biological role, catalyzes the oxidation of 5,10-methylenetetrahydrofolate to 5,10-methenyltetrahydrofolate and then the hydrolysis of 5,10-methenyltetrahydrofolate to 10-formyltetrahydrofolate. This chain is Bifunctional protein FolD 2, found in Geobacter sulfurreducens (strain ATCC 51573 / DSM 12127 / PCA).